The primary structure comprises 173 residues: Protein tyrosine phosphatase type IVA 1 (173 aa).

Positions 8–161 (APVEVTYKNM…YRPKMRLRFK (154 aa)) constitute a Tyrosine-protein phosphatase domain. A disulfide bond links cysteine 49 and cysteine 104. The active-site Proton donor is aspartate 72. An interaction with ATF5 region spans residues 97-132 (GCCIAVHCVAGLGRAPVLVALALIEGGMKYEDAVQF). Catalysis depends on cysteine 104, which acts as the Phosphocysteine intermediate. 105-110 (VAGLGR) is a binding site for phosphate. Position 110 (arginine 110) interacts with substrate. Cysteine 170 bears the Cysteine methyl ester mark. Cysteine 170 carries the S-farnesyl cysteine lipid modification. The propeptide at 171 to 173 (CIQ) is removed in mature form.

It belongs to the protein-tyrosine phosphatase family. In terms of assembly, homotrimer. Interacts with ATF5. Interacts with tubulin. Farnesylated. Farnesylation is required for membrane targeting. Unfarnesylated forms are shifted into the nucleus. In terms of tissue distribution, expressed in bone marrow, lymph nodes, T lymphocytes, spleen, thymus and tonsil. Overexpressed in tumor cell lines.

The protein localises to the cell membrane. It is found in the early endosome. The protein resides in the endoplasmic reticulum. It localises to the cytoplasm. Its subcellular location is the cytoskeleton. The protein localises to the spindle. It is found in the nucleus. It catalyses the reaction O-phospho-L-tyrosyl-[protein] + H2O = L-tyrosyl-[protein] + phosphate. Inhibited by sodium orthovanadate and pentamidine. Its function is as follows. Protein tyrosine phosphatase which stimulates progression from G1 into S phase during mitosis. May play a role in the development and maintenance of differentiating epithelial tissues. Enhances cell proliferation, cell motility and invasive activity, and promotes cancer metastasis. The sequence is that of Protein tyrosine phosphatase type IVA 1 (PTP4A1) from Homo sapiens (Human).